The sequence spans 197 residues: Adenylyl-sulfate kinase (197 aa).

Position 33 to 40 (33 to 40 (GLSGSGKS)) interacts with ATP. Ser-107 serves as the catalytic Phosphoserine intermediate.

Belongs to the APS kinase family.

The enzyme catalyses adenosine 5'-phosphosulfate + ATP = 3'-phosphoadenylyl sulfate + ADP + H(+). The protein operates within sulfur metabolism; hydrogen sulfide biosynthesis; sulfite from sulfate: step 2/3. Functionally, catalyzes the synthesis of activated sulfate. This is Adenylyl-sulfate kinase from Bacillus pumilus (strain SAFR-032).